A 617-amino-acid polypeptide reads, in one-letter code: BPI fold-containing family B member 4 (617 aa).

A signal peptide spans M1–G17. The interval R124–L149 is disordered. N275 is a glycosylation site (N-linked (GlcNAc...) asparagine). An intrachain disulfide couples C297 to C334.

The protein belongs to the BPI/LBP/Plunc superfamily. BPI/LBP family. Highly expressed in olfactory mucosa but undetectable in thymus, kidney, lung, brain, spleen and liver.

It localises to the secreted. The protein resides in the cytoplasm. Functionally, may have the capacity to recognize and bind specific classes of odorants. May act as a carrier molecule, transporting odorants across the mucus layer to access receptor sites. May serve as a primary defense mechanism by recognizing and removing potentially harmful odorants or pathogenic microorganisms from the mucosa or clearing excess odorant from mucus to enable new odorant stimuli to be received. In Rattus norvegicus (Rat), this protein is BPI fold-containing family B member 4 (Bpifb4).